A 194-amino-acid polypeptide reads, in one-letter code: uncharacterized protein (194 aa).

To A.aeolicus AQ_423.

This is an uncharacterized protein from Aquifex aeolicus (strain VF5).